The sequence spans 255 residues: 5'-nucleotidase SurE (255 aa).

4 residues coordinate a divalent metal cation: aspartate 8, aspartate 9, serine 40, and asparagine 93.

Belongs to the SurE nucleotidase family. The cofactor is a divalent metal cation.

The protein localises to the cytoplasm. It carries out the reaction a ribonucleoside 5'-phosphate + H2O = a ribonucleoside + phosphate. In terms of biological role, nucleotidase that shows phosphatase activity on nucleoside 5'-monophosphates. The polypeptide is 5'-nucleotidase SurE (Rhodopseudomonas palustris (strain HaA2)).